The sequence spans 327 residues: Aspartate--ammonia ligase (327 aa).

Belongs to the class-II aminoacyl-tRNA synthetase family. AsnA subfamily.

It localises to the cytoplasm. It catalyses the reaction L-aspartate + NH4(+) + ATP = L-asparagine + AMP + diphosphate + H(+). It participates in amino-acid biosynthesis; L-asparagine biosynthesis; L-asparagine from L-aspartate (ammonia route): step 1/1. This is Aspartate--ammonia ligase from Bacillus cereus (strain AH187).